The following is an 81-amino-acid chain: Antimicrobial peptide D2 (81 aa).

A signal peptide spans Met1–Glu31. 4 cysteine pairs are disulfide-bonded: Cys34-Cys81, Cys45-Cys66, Cys51-Cys75, and Cys55-Cys77.

Its function is as follows. Antimicrobial peptide probably active against fungi like B.sorokiniana, F.oxysporum, F.graminearum, F.avenaceum, B.cinerea, P.beta, P.infestans and P.debaryanum. This Stellaria media (Common chickweed) protein is Antimicrobial peptide D2.